Here is a 416-residue protein sequence, read N- to C-terminus: UDP-N-acetylmuramoylalanine--D-glutamate ligase (416 aa).

An ATP-binding site is contributed by Gly-108–Thr-114.

Belongs to the MurCDEF family.

It is found in the cytoplasm. The catalysed reaction is UDP-N-acetyl-alpha-D-muramoyl-L-alanine + D-glutamate + ATP = UDP-N-acetyl-alpha-D-muramoyl-L-alanyl-D-glutamate + ADP + phosphate + H(+). Its pathway is cell wall biogenesis; peptidoglycan biosynthesis. In terms of biological role, cell wall formation. Catalyzes the addition of glutamate to the nucleotide precursor UDP-N-acetylmuramoyl-L-alanine (UMA). The protein is UDP-N-acetylmuramoylalanine--D-glutamate ligase of Chlamydia trachomatis serovar L2 (strain ATCC VR-902B / DSM 19102 / 434/Bu).